Here is a 345-residue protein sequence, read N- to C-terminus: Tyrosine-binding protein (345 aa).

A signal peptide spans 1-23 (MIKSKKILSLIIAGVLGVSMLTG). C24 carries N-palmitoyl cysteine lipidation. A lipid anchor (S-diacylglycerol cysteine) is attached at C24.

In terms of assembly, the complex is probably composed of two ATP-binding proteins (CDR20291_0806), two transmembrane proteins (CDR20291_0807) and a solute-binding protein (CDR20291_0805).

It is found in the cell membrane. Its function is as follows. Probably part of an ABC transporter complex involved in tyrosine uptake. May also import phenylalanine. This chain is Tyrosine-binding protein, found in Clostridioides difficile (strain R20291) (Peptoclostridium difficile).